A 614-amino-acid polypeptide reads, in one-letter code: 4-hydroxy-3-methylbut-2-en-1-yl diphosphate synthase (flavodoxin) (614 aa).

[4Fe-4S] cluster contacts are provided by C522, C525, C556, and E563.

The protein belongs to the IspG family. The cofactor is [4Fe-4S] cluster.

The catalysed reaction is (2E)-4-hydroxy-3-methylbut-2-enyl diphosphate + oxidized [flavodoxin] + H2O + 2 H(+) = 2-C-methyl-D-erythritol 2,4-cyclic diphosphate + reduced [flavodoxin]. It functions in the pathway isoprenoid biosynthesis; isopentenyl diphosphate biosynthesis via DXP pathway; isopentenyl diphosphate from 1-deoxy-D-xylulose 5-phosphate: step 5/6. Its function is as follows. Converts 2C-methyl-D-erythritol 2,4-cyclodiphosphate (ME-2,4cPP) into 1-hydroxy-2-methyl-2-(E)-butenyl 4-diphosphate. This is 4-hydroxy-3-methylbut-2-en-1-yl diphosphate synthase (flavodoxin) from Phocaeicola vulgatus (strain ATCC 8482 / DSM 1447 / JCM 5826 / CCUG 4940 / NBRC 14291 / NCTC 11154) (Bacteroides vulgatus).